A 132-amino-acid chain; its full sequence is MSNDIISNMITSIRNAILSKTKTVDILATTTTRSIAKILLQEGFIDGLRERQENGRRLLLLTLHYERKNKSKITTSLRRISKPGLRVYSNHQEIPKVLGGIGIVILSTSKGIMVDREARHKKIGGEIICYVS.

The protein belongs to the universal ribosomal protein uS8 family. In terms of assembly, part of the 30S ribosomal subunit.

The protein localises to the plastid. It is found in the chloroplast. In terms of biological role, one of the primary rRNA binding proteins, it binds directly to 16S rRNA central domain where it helps coordinate assembly of the platform of the 30S subunit. The polypeptide is Small ribosomal subunit protein uS8c (rps8) (Spirogyra maxima (Green alga)).